Reading from the N-terminus, the 1222-residue chain is ATP-dependent helicase/nuclease subunit A (1222 aa).

The 457-residue stretch at 39-495 folds into the UvrD-like helicase ATP-binding domain; sequence QKRTAQQIEA…ILLKENFRSQ (457 aa). 60–67 contacts ATP; sequence ASAGSGKT. Residues 524–810 form the UvrD-like helicase C-terminal domain; that stretch reads QLIAGSHAQT…NLMTIHKSKG (287 aa).

This sequence belongs to the helicase family. AddA subfamily. Heterodimer of AddA and AddB/RexB. Mg(2+) is required as a cofactor.

The catalysed reaction is Couples ATP hydrolysis with the unwinding of duplex DNA by translocating in the 3'-5' direction.. The enzyme catalyses ATP + H2O = ADP + phosphate + H(+). The heterodimer acts as both an ATP-dependent DNA helicase and an ATP-dependent, dual-direction single-stranded exonuclease. Recognizes the chi site generating a DNA molecule suitable for the initiation of homologous recombination. The AddA nuclease domain is required for chi fragment generation; this subunit has the helicase and 3' -&gt; 5' nuclease activities. In Streptococcus pyogenes serotype M12 (strain MGAS2096), this protein is ATP-dependent helicase/nuclease subunit A.